Consider the following 250-residue polypeptide: MTTLIISDLHLDPLRPVVTELFLRFLREQVSGADALYILGDLFEIWIGDDMPSEVADMVVAALRTHADAGTPLYFMPGNRDFLVGADYAARAGFRILPDPCVVDLYGEPTLLLHGDLLCTDDIAYQAFRAQTRDPEFIAQFLTQTLSARLAFAQQARLASHAHQSGLKQENDSTQFEKITDVVPADVAAMFACYGVNRMIHGHTHRPALHMLQVAECACTRVVLGDWYQQGSVLCVDADGLVLEQLLLPG.

Mn(2+)-binding residues include Asp-8, His-10, Asp-41, Asn-79, and His-114. 79 to 80 (NR) contributes to the substrate binding site. Residues Asp-122, Ser-160, Asp-172, Gln-175, and His-203 each contribute to the substrate site. Residues His-203 and His-205 each contribute to the Mn(2+) site.

The protein belongs to the LpxH family. The cofactor is Mn(2+).

It localises to the cell inner membrane. The enzyme catalyses UDP-2-N,3-O-bis[(3R)-3-hydroxytetradecanoyl]-alpha-D-glucosamine + H2O = 2-N,3-O-bis[(3R)-3-hydroxytetradecanoyl]-alpha-D-glucosaminyl 1-phosphate + UMP + 2 H(+). It participates in glycolipid biosynthesis; lipid IV(A) biosynthesis; lipid IV(A) from (3R)-3-hydroxytetradecanoyl-[acyl-carrier-protein] and UDP-N-acetyl-alpha-D-glucosamine: step 4/6. Its function is as follows. Hydrolyzes the pyrophosphate bond of UDP-2,3-diacylglucosamine to yield 2,3-diacylglucosamine 1-phosphate (lipid X) and UMP by catalyzing the attack of water at the alpha-P atom. Involved in the biosynthesis of lipid A, a phosphorylated glycolipid that anchors the lipopolysaccharide to the outer membrane of the cell. This Xylella fastidiosa (strain M23) protein is UDP-2,3-diacylglucosamine hydrolase.